The chain runs to 558 residues: uncharacterized protein (558 aa).

Residues Ser7–Ser206 enclose the DhaL domain.

This is an uncharacterized protein from Mycoplasma pneumoniae (strain ATCC 29342 / M129 / Subtype 1) (Mycoplasmoides pneumoniae).